Consider the following 361-residue polypeptide: MNVTNEKMRFWSPEVRELEPYVPGEQPKIQNLLKLNTNENPYPPSPKVKAAVETVLVDQADALRLYPDPDASLLKQAIAKQQHLSVEQVFVGNGSDEVLAHIFKAFFIQDEPILYPDISYSFYPVYSQFFGVQTKQIPLNDHFEIVVEDYQQNNGGIIIANPNAPTSIALSLKNIEQILKNNPDRVVVIDEAYVDFGAESAASLVNQYDNLVVCQTTSKSRSLAGLRVGYALAQAHLIAALEAVKNSFNSYPIDRFAIAAAVASFEDQAYFEEQCLKVIQSREQLIEQLETIGFDVLPSKANFIFVTHPAHVAIELAKALREQGIIVRHFNKPRINQYLRITVGTDEQNQRLVNTLKLFIN.

At lysine 219 the chain carries N6-(pyridoxal phosphate)lysine.

The protein belongs to the class-II pyridoxal-phosphate-dependent aminotransferase family. Histidinol-phosphate aminotransferase subfamily. In terms of assembly, homodimer. It depends on pyridoxal 5'-phosphate as a cofactor.

The catalysed reaction is L-histidinol phosphate + 2-oxoglutarate = 3-(imidazol-4-yl)-2-oxopropyl phosphate + L-glutamate. Its pathway is amino-acid biosynthesis; L-histidine biosynthesis; L-histidine from 5-phospho-alpha-D-ribose 1-diphosphate: step 7/9. The protein is Histidinol-phosphate aminotransferase of Acinetobacter baylyi (strain ATCC 33305 / BD413 / ADP1).